The primary structure comprises 246 residues: Phosphomannomutase 2 (246 aa).

A2 carries the post-translational modification N-acetylalanine. D12 functions as the Nucleophile in the catalytic mechanism. Residues D12 and D14 each contribute to the Mg(2+) site. D14 acts as the Proton donor/acceptor in catalysis. Alpha-D-mannose 1-phosphate-binding residues include R21, R123, R134, and R141. K149 bears the N6-acetyllysine mark. The alpha-D-mannose 1-phosphate site is built by S179 and D181. Mg(2+) is bound by residues D209, F221, D223, and T226.

This sequence belongs to the eukaryotic PMM family. Homodimer.

It is found in the cytoplasm. The enzyme catalyses alpha-D-mannose 1-phosphate = D-mannose 6-phosphate. It participates in nucleotide-sugar biosynthesis; GDP-alpha-D-mannose biosynthesis; alpha-D-mannose 1-phosphate from D-fructose 6-phosphate: step 2/2. In terms of biological role, involved in the synthesis of the GDP-mannose and dolichol-phosphate-mannose required for a number of critical mannosyl transfer reactions. The protein is Phosphomannomutase 2 (PMM2) of Homo sapiens (Human).